The sequence spans 121 residues: Small ribosomal subunit protein uS13 (121 aa).

Residues 95 to 121 (LPVRGQNTKNNARTRKGKAVAIAGKKK) are disordered. The segment covering 106–121 (ARTRKGKAVAIAGKKK) has biased composition (basic residues).

The protein belongs to the universal ribosomal protein uS13 family. As to quaternary structure, part of the 30S ribosomal subunit. Forms a loose heterodimer with protein S19. Forms two bridges to the 50S subunit in the 70S ribosome.

Functionally, located at the top of the head of the 30S subunit, it contacts several helices of the 16S rRNA. In the 70S ribosome it contacts the 23S rRNA (bridge B1a) and protein L5 of the 50S subunit (bridge B1b), connecting the 2 subunits; these bridges are implicated in subunit movement. Contacts the tRNAs in the A and P-sites. In Streptococcus equi subsp. zooepidemicus (strain H70), this protein is Small ribosomal subunit protein uS13.